Here is a 158-residue protein sequence, read N- to C-terminus: 2-C-methyl-D-erythritol 2,4-cyclodiphosphate synthase (158 aa).

Asp9 and His11 together coordinate a divalent metal cation. 4-CDP-2-C-methyl-D-erythritol 2-phosphate is bound by residues Asp9–His11 and His35–Ser36. Residue His43 coordinates a divalent metal cation. 4-CDP-2-C-methyl-D-erythritol 2-phosphate contacts are provided by residues Asp57–Gly59, Phe62–Asp66, Thr133–Glu136, Phe140, and Arg143.

This sequence belongs to the IspF family. As to quaternary structure, homotrimer. It depends on a divalent metal cation as a cofactor.

The enzyme catalyses 4-CDP-2-C-methyl-D-erythritol 2-phosphate = 2-C-methyl-D-erythritol 2,4-cyclic diphosphate + CMP. It functions in the pathway isoprenoid biosynthesis; isopentenyl diphosphate biosynthesis via DXP pathway; isopentenyl diphosphate from 1-deoxy-D-xylulose 5-phosphate: step 4/6. Functionally, involved in the biosynthesis of isopentenyl diphosphate (IPP) and dimethylallyl diphosphate (DMAPP), two major building blocks of isoprenoid compounds. Catalyzes the conversion of 4-diphosphocytidyl-2-C-methyl-D-erythritol 2-phosphate (CDP-ME2P) to 2-C-methyl-D-erythritol 2,4-cyclodiphosphate (ME-CPP) with a corresponding release of cytidine 5-monophosphate (CMP). This Actinobacillus pleuropneumoniae serotype 5b (strain L20) protein is 2-C-methyl-D-erythritol 2,4-cyclodiphosphate synthase.